A 360-amino-acid chain; its full sequence is Phospho-N-acetylmuramoyl-pentapeptide-transferase (360 aa).

The next 10 membrane-spanning stretches (helical) occupy residues 27 to 47, 70 to 90, 98 to 118, 134 to 154, 168 to 188, 199 to 219, 239 to 259, 263 to 283, 288 to 308, and 337 to 357; these read GALFTAGFFVFWFGPWIISLL, GTPTMGGLMILAGAVVSILLW, VWVTLAVTLGFGAIGFYDDYL, LLLEFAIAGAACLMISLYSPA, TLLNLGWFWVPFAAFVIVGAG, GLAIVPVMIACATFGIIAYLV, LAVVCGAVIGAGLGFLWFNAP, IFMGDTGSLALGGLLGSIAVA, IVLAIVGGLFVLEIMSVIIQV, and QVVIRFWIIAVILALVGLATL.

It belongs to the glycosyltransferase 4 family. MraY subfamily. Mg(2+) is required as a cofactor.

It localises to the cell inner membrane. It catalyses the reaction UDP-N-acetyl-alpha-D-muramoyl-L-alanyl-gamma-D-glutamyl-meso-2,6-diaminopimeloyl-D-alanyl-D-alanine + di-trans,octa-cis-undecaprenyl phosphate = di-trans,octa-cis-undecaprenyl diphospho-N-acetyl-alpha-D-muramoyl-L-alanyl-D-glutamyl-meso-2,6-diaminopimeloyl-D-alanyl-D-alanine + UMP. The protein operates within cell wall biogenesis; peptidoglycan biosynthesis. Catalyzes the initial step of the lipid cycle reactions in the biosynthesis of the cell wall peptidoglycan: transfers peptidoglycan precursor phospho-MurNAc-pentapeptide from UDP-MurNAc-pentapeptide onto the lipid carrier undecaprenyl phosphate, yielding undecaprenyl-pyrophosphoryl-MurNAc-pentapeptide, known as lipid I. This Methylorubrum extorquens (strain CM4 / NCIMB 13688) (Methylobacterium extorquens) protein is Phospho-N-acetylmuramoyl-pentapeptide-transferase.